The primary structure comprises 433 residues: Acetyl-CoA-benzylalcohol acetyltransferase (433 aa).

Catalysis depends on proton acceptor residues His-152 and Asp-377.

This sequence belongs to the plant acyltransferase family. In terms of processing, the N-terminus is blocked. As to expression, expressed in petals, style, sepals and stamens. Very low expression in stigma and not detected in leaves.

It carries out the reaction benzyl alcohol + acetyl-CoA = benzyl acetate + CoA. It catalyses the reaction (E)-cinnamyl alcohol + acetyl-CoA = (E)-cinnamyl acetate + CoA. Its function is as follows. Involved in the biosynthesis of benzyl acetate, a major constituent of the floral scent. Can use benzylalcohol, cinnamylalcohol, 3-cis-hexene-1-ol or heptanol as substrates. Has some activity with 2-phenylethanol and 2-naphtalene-ethanol, but no activity with linalool, 2-hydroxybenzylalcohol, 3-hydroxybenzylalcohol or 4-hydroxybenzylalcohol. The polypeptide is Acetyl-CoA-benzylalcohol acetyltransferase (BEAT) (Clarkia breweri (Fairy fans)).